Here is a 317-residue protein sequence, read N- to C-terminus: Acetyl-coenzyme A carboxylase carboxyl transferase subunit alpha (317 aa).

The CoA carboxyltransferase C-terminal domain occupies 37 to 292 (RLEKKAEKLR…RICLKKHLDD (256 aa)).

The protein belongs to the AccA family. As to quaternary structure, acetyl-CoA carboxylase is a heterohexamer composed of biotin carboxyl carrier protein (AccB), biotin carboxylase (AccC) and two subunits each of ACCase subunit alpha (AccA) and ACCase subunit beta (AccD).

It is found in the cytoplasm. The enzyme catalyses N(6)-carboxybiotinyl-L-lysyl-[protein] + acetyl-CoA = N(6)-biotinyl-L-lysyl-[protein] + malonyl-CoA. The protein operates within lipid metabolism; malonyl-CoA biosynthesis; malonyl-CoA from acetyl-CoA: step 1/1. Functionally, component of the acetyl coenzyme A carboxylase (ACC) complex. First, biotin carboxylase catalyzes the carboxylation of biotin on its carrier protein (BCCP) and then the CO(2) group is transferred by the carboxyltransferase to acetyl-CoA to form malonyl-CoA. This chain is Acetyl-coenzyme A carboxylase carboxyl transferase subunit alpha, found in Syntrophotalea carbinolica (strain DSM 2380 / NBRC 103641 / GraBd1) (Pelobacter carbinolicus).